Here is a 55-residue protein sequence, read N- to C-terminus: AYKIEETCISCGACAAECPVNAIEQGDTIFVVNADTCIDCGNCANVCPVGAPVAE.

2 consecutive 4Fe-4S ferredoxin-type domains span residues Tyr-2 to Asp-27 and Thr-28 to Glu-55. [4Fe-4S] cluster contacts are provided by Cys-8, Cys-11, Cys-14, Cys-18, Cys-37, Cys-40, Cys-43, and Cys-47.

[4Fe-4S] cluster is required as a cofactor.

Ferredoxins are iron-sulfur proteins that transfer electrons in a wide variety of metabolic reactions. This chain is Ferredoxin-1, found in Rhodospirillum rubrum.